The sequence spans 144 residues: 3-dehydroquinate dehydratase (144 aa).

The active-site Proton acceptor is Y22. Residues N71, H77, and D84 each coordinate substrate. Catalysis depends on H97, which acts as the Proton donor. Residues 98-99 and R108 contribute to the substrate site; that span reads IS.

This sequence belongs to the type-II 3-dehydroquinase family. As to quaternary structure, homododecamer.

The enzyme catalyses 3-dehydroquinate = 3-dehydroshikimate + H2O. The protein operates within metabolic intermediate biosynthesis; chorismate biosynthesis; chorismate from D-erythrose 4-phosphate and phosphoenolpyruvate: step 3/7. Catalyzes a trans-dehydration via an enolate intermediate. The protein is 3-dehydroquinate dehydratase (aroQ) of Thermotoga maritima (strain ATCC 43589 / DSM 3109 / JCM 10099 / NBRC 100826 / MSB8).